We begin with the raw amino-acid sequence, 503 residues long: MADGIEIGFGPLEQSGQGPGGSGDLVVFVGDDLSLGSAAREALGASGADLVARAAASEKFKGRSLSALSLPAPAGVGADRLVVVGLGSEKDRAKTDWPALGGFTASKVAGRTARVVLDWPGTTVTAAQAGEFALGARLRTYAFDRYKTKKKPDADDKSVTALTLLLADHGAAAREGEGARSLSDGVILARDLVNEPPNVLFPAEFARRASELAKLGVEIEVLEPARMRELGMGALLAVAQGSAREPRIVIMRWNGGPAAEAPVALIGKGVVFDSGGVSIKPGGGMEDMKGDMGGAAAVVGALHALAARKARCNVVGAIGIVENMPDGGAYRPSDILTSMSGQTIEVINTDAEGRLVLADVITHVIRSTKPKAIVDLATLTGAIIVALGQDIAGMFSNDDTLASNIHAAGEATGEKVWRMPLIPAYDKAIDSKFADMKNTGGRHGGAATAASFIKRYVEDVPWAHLDIAGVAMSSNASEINRSWGAGWGVRLLDRLIRDHYEAR.

Mn(2+) is bound by residues Lys268 and Asp273. The active site involves Lys280. 3 residues coordinate Mn(2+): Asp291, Asp350, and Glu352. Arg354 is a catalytic residue.

This sequence belongs to the peptidase M17 family. It depends on Mn(2+) as a cofactor.

Its subcellular location is the cytoplasm. It catalyses the reaction Release of an N-terminal amino acid, Xaa-|-Yaa-, in which Xaa is preferably Leu, but may be other amino acids including Pro although not Arg or Lys, and Yaa may be Pro. Amino acid amides and methyl esters are also readily hydrolyzed, but rates on arylamides are exceedingly low.. The enzyme catalyses Release of an N-terminal amino acid, preferentially leucine, but not glutamic or aspartic acids.. Functionally, presumably involved in the processing and regular turnover of intracellular proteins. Catalyzes the removal of unsubstituted N-terminal amino acids from various peptides. This is Probable cytosol aminopeptidase from Methylobacterium radiotolerans (strain ATCC 27329 / DSM 1819 / JCM 2831 / NBRC 15690 / NCIMB 10815 / 0-1).